We begin with the raw amino-acid sequence, 332 residues long: Protein pelota homolog (332 aa).

Belongs to the eukaryotic release factor 1 family. Pelota subfamily. In terms of assembly, monomer. The cofactor is a divalent metal cation.

It is found in the cytoplasm. Its function is as follows. May function in recognizing stalled ribosomes, interact with stem-loop structures in stalled mRNA molecules, and effect endonucleolytic cleavage of the mRNA. May play a role in the release non-functional ribosomes and degradation of damaged mRNAs. Has endoribonuclease activity. The sequence is that of Protein pelota homolog from Pyrobaculum aerophilum (strain ATCC 51768 / DSM 7523 / JCM 9630 / CIP 104966 / NBRC 100827 / IM2).